The primary structure comprises 401 residues: MRTLAIFFIGAAVAAHVSPSHLRPRDPKPKGPVDPGISPYCTYYDEAYDKSYTCDDLLSAWVISKQDFESWNPAVGSDCKLVLGHSYCVEVNHGNPLSTTTTTTTSTTTKTTTKTTTTTTAAPKPTSSAPSGPSPTQDGLVHDCKAYYFVKAGDTCDKISQMYGTFSTAQFIEWNPAVGSSCTGLWAGYYYCVGVPGTPTSRTSTAGPTSTKPANGVTTPQPTQPNMVQDCDQFVYVQPGDQCGTVASRAGVSLSDFLQWNPSTGKDCSGLWANAYACVGVIPAIALSARYHADCTGATHSTEHFNPGTGHCVNTACQVASLDIAAKGTCPDGNVRISYWEQPDCTGSWFGYGYASRGQCRTLWSEGWKFKSLYITCASKESDCVSQNSCTISPIPNNNVC.

Positions 1–19 (MRTLAIFFIGAAVAAHVSP) are cleaved as a signal peptide. Residues 42–89 (TYYDEAYDKSYTCDDLLSAWVISKQDFESWNPAVGSDCKLVLGHSYCV) enclose the LysM 1 domain. Residues 98–136 (STTTTTTTSTTTKTTTKTTTTTTAAPKPTSSAPSGPSPT) are compositionally biased toward low complexity. The segment at 98 to 137 (STTTTTTTSTTTKTTTKTTTTTTAAPKPTSSAPSGPSPTQ) is disordered. The LysM 2 domain maps to 146–193 (AYYFVKAGDTCDKISQMYGTFSTAQFIEWNPAVGSSCTGLWAGYYYCV). Residues 201–223 (SRTSTAGPTSTKPANGVTTPQPT) are disordered. The LysM 3 domain occupies 233 to 279 (QFVYVQPGDQCGTVASRAGVSLSDFLQWNPSTGKDCSGLWANAYACV).

This sequence belongs to the secreted LysM effector family.

Its function is as follows. Might have a role in sequestration of chitin oligosaccharides (breakdown products of fungal cell walls that are released during invasion and act as triggers of host immunity) to dampen host defense. This chain is Secreted LysM effector Blys8, found in Beauveria bassiana (strain ARSEF 2860) (White muscardine disease fungus).